The primary structure comprises 859 residues: Leucine--tRNA ligase (859 aa).

Positions proline 42–histidine 52 match the 'HIGH' region motif. A 'KMSKS' region motif is present at residues lysine 618 to serine 622. Lysine 621 contributes to the ATP binding site.

The protein belongs to the class-I aminoacyl-tRNA synthetase family.

The protein resides in the cytoplasm. It carries out the reaction tRNA(Leu) + L-leucine + ATP = L-leucyl-tRNA(Leu) + AMP + diphosphate. The chain is Leucine--tRNA ligase from Shewanella pealeana (strain ATCC 700345 / ANG-SQ1).